We begin with the raw amino-acid sequence, 1233 residues long: DNA-directed RNA polymerase subunit beta' (1233 aa).

Zn(2+)-binding residues include C61, C63, C76, and C79. Residues D455, D457, and D459 each coordinate Mg(2+). Zn(2+)-binding residues include C824, C898, C905, and C908. Residues 1211-1220 (ELQKAFDKEP) show a composition bias toward basic and acidic residues. Residues 1211 to 1233 (ELQKAFDKEPASSTGNKASNSAK) are disordered. The segment covering 1221 to 1233 (ASSTGNKASNSAK) has biased composition (polar residues).

Belongs to the RNA polymerase beta' chain family. In terms of assembly, the RNAP catalytic core consists of 2 alpha, 1 beta, 1 beta' and 1 omega subunit. When a sigma factor is associated with the core the holoenzyme is formed, which can initiate transcription. It depends on Mg(2+) as a cofactor. Zn(2+) serves as cofactor.

It catalyses the reaction RNA(n) + a ribonucleoside 5'-triphosphate = RNA(n+1) + diphosphate. In terms of biological role, DNA-dependent RNA polymerase catalyzes the transcription of DNA into RNA using the four ribonucleoside triphosphates as substrates. This Oenococcus oeni (strain ATCC BAA-331 / PSU-1) protein is DNA-directed RNA polymerase subunit beta'.